A 560-amino-acid polypeptide reads, in one-letter code: Triacylglyceride transporter MSMEG_3069/MSMEI_2992 (560 aa).

Helical transmembrane passes span 16–36 (LAVL…VDIM), 48–68 (QVTP…PLLG), 78–98 (MLIQ…ALSS), 108–128 (IIQG…AADL), 143–163 (AAQE…VWLF), 168–188 (AVFW…HFSL), 200–220 (VDVI…VGLY), 229–249 (VLPS…VAFF), 269–289 (PFLA…VTLV), 307–327 (AFLL…GGWL), 336–356 (VVLI…HWSV), 368–388 (FTLP…GLVI), 411–431 (VVVA…AWGF), and 477–497 (IFLS…LISG). Residues 362–371 (RHNLGLFTLP) are beta-hairpin. Residues 519–560 (IDPYDAGDADDAPTEMLDLPTQVLSAPPSDPGDERPGRHRAP) are disordered.

It belongs to the major facilitator superfamily. P55 (TC 2.A.1.3.34) family.

It is found in the cell inner membrane. Resistance to ethidium bromide is inhibited by reserpine. In terms of biological role, in association with lipoprotein LprG transports triacyglycerides (TAG) across the inner cell membrane into the periplasm; TAG probably regulates lipid metabolism and growth regulation and plays a structural role in the outer membrane. TAG (and maybe other lipids) enters the central cavity of the P55 transporter from within the cell inner membrane via clefts on the cytoplasmic face of P55 between TM5-TM8 and TM2-TM11. From there the lipid is probably transferred to the hydrophobic cavity of LprG. Confers resistance to ethidium bromide, possibly acting as an efflux pump, requires LprG lipoprotein for normal function. Export of ethidium bromide can be complemented by the equivalent operon from M.tuberculosis (lprG-Rv1410c). Involved in drug susceptibilty, its expression alone partially complements the antibiotic susceptibilty of a double lprG-mfs deletion. Probably does not function as a bona fide drug efflux pump, but instead plays a role in outer membrane biogenesis. Probably required with LprG for normal surface localization of lipoarabinomannan (LAM). This is Triacylglyceride transporter MSMEG_3069/MSMEI_2992 from Mycolicibacterium smegmatis (strain ATCC 700084 / mc(2)155) (Mycobacterium smegmatis).